Here is a 460-residue protein sequence, read N- to C-terminus: Xyloglucan 6-xylosyltransferase 1 (460 aa).

Residues 1-20 (MIEKCIGAHRFRRLQRFMRQ) are Cytoplasmic-facing. A helical; Signal-anchor for type II membrane protein membrane pass occupies residues 21–40 (GKVTILCLVLTVIVLRGTIG). At 41 to 460 (AGKFGTPEKD…KAAKLSTTTT (420 aa)) the chain is on the lumenal side. UDP-alpha-D-xylose-binding positions include G156 and 227–229 (DSD). The Mn(2+) site is built by D227 and D229. A substrate-binding site is contributed by H346. UDP-alpha-D-xylose-binding residues include H377, G380, and K382. A Mn(2+)-binding site is contributed by H377. Substrate is bound by residues K382 and 389 to 390 (DY). N431 carries N-linked (GlcNAc...) asparagine glycosylation.

This sequence belongs to the glycosyltransferase 34 family. Forms homodimer. Interacts with XXT2. Mn(2+) is required as a cofactor.

Its subcellular location is the golgi apparatus membrane. The catalysed reaction is Transfers an alpha-D-xylosyl residue from UDP-D-xylose to a glucose residue in xyloglucan, forming an alpha-(1-&gt;6)-D-xylosyl-D-glucose linkage.. The protein operates within protein modification; protein glycosylation. In terms of biological role, xylosyltransferase specific to UDP-D-xylose that accepts both cellopentaose and cellohexaose as substrates, with a better use of cellohexaose, to produce xyloglucan. Adds preferentially the first xylosyl residue to the fourth glucosyl residue from the reducing end of both acceptors. Transfer one xylose mainly to the second glucose residue from the non-reducing end. The acceptor should have a minimum of four glucose residues. In Arabidopsis thaliana (Mouse-ear cress), this protein is Xyloglucan 6-xylosyltransferase 1.